The primary structure comprises 491 residues: MKERKVIIKTGLNLENSYTSLPEIFFTRQSPSRVPSPKLAVLNYSLITSLGLNAQVLQSADGVEILAGNKTPEEAIPISQAYAGHQFGHFTMLGDGRAILLGEHITPQGERFDIQLKGSGKTPYSRGGDGKAALGPMLREYIISEAMNALGIPTTRSLAVVTTGESIMRETELSGAILTRVAASHIRVGTFEYVSRWGTVEELRALANYTLQRHFKKGYDKENPYLFLLQEVIEKQAELIAKWQLVGFVHGVMNTDNMTISGETIDYGPCAFMDVYDPETVFSSIDIYGRYAYGNQPNIATWNLARFAETLLPLLHINPNEAIKIAENAVSDFTKLYKNNWLSGMRAKLGIFNEELEDEYLIEDLLSIMHKYGADYTNTFRALTFDNIEDTVLGGKVEFDKWYKLWQERLTRQEEAKLSSKQLMKSSNPSVIPRNHRVEEALEAAVKEGDYSVMEKLLDALSKPYDHSKEQDYYSKLPEPSTCPYQTYCGT.

Residues Gly94, Gly96, Arg97, Lys117, Asp129, Gly130, Arg180, and Arg187 each coordinate ATP. Asp256 serves as the catalytic Proton acceptor. 2 residues coordinate Mg(2+): Asn257 and Asp266. Asp266 is an ATP binding site.

The protein belongs to the SELO family. Mg(2+) is required as a cofactor. Mn(2+) serves as cofactor.

The enzyme catalyses L-seryl-[protein] + ATP = 3-O-(5'-adenylyl)-L-seryl-[protein] + diphosphate. It catalyses the reaction L-threonyl-[protein] + ATP = 3-O-(5'-adenylyl)-L-threonyl-[protein] + diphosphate. It carries out the reaction L-tyrosyl-[protein] + ATP = O-(5'-adenylyl)-L-tyrosyl-[protein] + diphosphate. The catalysed reaction is L-histidyl-[protein] + UTP = N(tele)-(5'-uridylyl)-L-histidyl-[protein] + diphosphate. The enzyme catalyses L-seryl-[protein] + UTP = O-(5'-uridylyl)-L-seryl-[protein] + diphosphate. It catalyses the reaction L-tyrosyl-[protein] + UTP = O-(5'-uridylyl)-L-tyrosyl-[protein] + diphosphate. Its function is as follows. Nucleotidyltransferase involved in the post-translational modification of proteins. It can catalyze the addition of adenosine monophosphate (AMP) or uridine monophosphate (UMP) to a protein, resulting in modifications known as AMPylation and UMPylation. The chain is Protein nucleotidyltransferase YdiU from Clostridium botulinum (strain ATCC 19397 / Type A).